A 125-amino-acid chain; its full sequence is Large ribosomal subunit protein bL12 (125 aa).

The protein belongs to the bacterial ribosomal protein bL12 family. Homodimer. Part of the ribosomal stalk of the 50S ribosomal subunit. Forms a multimeric L10(L12)X complex, where L10 forms an elongated spine to which 2 to 4 L12 dimers bind in a sequential fashion. Binds GTP-bound translation factors.

Forms part of the ribosomal stalk which helps the ribosome interact with GTP-bound translation factors. Is thus essential for accurate translation. The chain is Large ribosomal subunit protein bL12 from Granulibacter bethesdensis (strain ATCC BAA-1260 / CGDNIH1).